Here is a 202-residue protein sequence, read N- to C-terminus: Complement component C8 gamma chain (202 aa).

An N-terminal signal peptide occupies residues Met-1–Gly-20. Position 21 is a pyrrolidone carboxylic acid (Gln-21). Cysteines 96 and 188 form a disulfide.

Belongs to the calycin superfamily. Lipocalin family. In terms of assembly, heterotrimer of 3 chains: alpha (C8A), beta (C8B) and gamma (C8G); the alpha and gamma chains are disulfide bonded. Component of the membrane attack complex (MAC), composed of complement C5b, C6, C7, C8A, C8B, C8G and multiple copies of the pore-forming subunit C9.

It is found in the secreted. The protein localises to the target cell membrane. Its activity is regulated as follows. Membrane attack complex (MAC) assembly is inhibited by CD59, thereby protecting self-cells from damage during complement activation. MAC assembly is also inhibited by clusterin (CLU) chaperones that inhibit polymerization of C9. Component of the membrane attack complex (MAC), a multiprotein complex activated by the complement cascade, which inserts into a target cell membrane and forms a pore, leading to target cell membrane rupture and cell lysis. The MAC is initiated by proteolytic cleavage of C5 into complement C5b in response to the classical, alternative, lectin and GZMK complement pathways. The complement pathways consist in a cascade of proteins that leads to phagocytosis and breakdown of pathogens and signaling that strengthens the adaptive immune system. C8G, together with C8A and C8B, inserts into the target membrane, but does not form pores by itself. During MAC assembly, associates with C5b, C6 and C7 to form the C5b8 intermediate complex that inserts into the target membrane and traverses the bilayer increasing membrane rigidity. This chain is Complement component C8 gamma chain, found in Homo sapiens (Human).